Here is a 49-residue protein sequence, read N- to C-terminus: Osteocalcin (49 aa).

The 47-residue stretch at 1-47 (YLDHGLGAPAPYPDPLEPKREVCELNPDCDELADHIGFQEAYRRFYG) folds into the Gla domain. Pro-9 carries the post-translational modification Hydroxyproline. Ca(2+)-binding residues include Glu-17, Glu-21, Glu-24, and Asp-30. 4-carboxyglutamate occurs at positions 17, 21, and 24. Cys-23 and Cys-29 are joined by a disulfide.

This sequence belongs to the osteocalcin/matrix Gla protein family. In terms of processing, gamma-carboxyglutamic acid residues are formed by vitamin K dependent carboxylation. These residues are essential for the binding of calcium.

Its subcellular location is the secreted. Its function is as follows. The carboxylated form is one of the main organic components of the bone matrix, which constitutes 1-2% of the total bone protein: it acts as a negative regulator of bone formation and is required to limit bone formation without impairing bone resorption or mineralization. The carboxylated form binds strongly to apatite and calcium. The uncarboxylated form acts as a hormone secreted by osteoblasts, which regulates different cellular processes, such as energy metabolism, male fertility and brain development. Regulates of energy metabolism by acting as a hormone favoring pancreatic beta-cell proliferation, insulin secretion and sensitivity and energy expenditure. Uncarboxylated osteocalcin hormone also promotes testosterone production in the testes: acts as a ligand for G protein-coupled receptor GPRC6A at the surface of Leydig cells, initiating a signaling response that promotes the expression of enzymes required for testosterone synthesis in a CREB-dependent manner. Also acts as a regulator of brain development: osteocalcin hormone crosses the blood-brain barrier and acts as a ligand for GPR158 on neurons, initiating a signaling response that prevents neuronal apoptosis in the hippocampus, favors the synthesis of all monoamine neurotransmitters and inhibits that of gamma-aminobutyric acid (GABA). Osteocalcin also crosses the placenta during pregnancy and maternal osteocalcin is required for fetal brain development. The sequence is that of Osteocalcin (BGLAP) from Bison priscus (Steppe wisent).